The following is a 205-amino-acid chain: Large ribosomal subunit protein uL4 (205 aa).

The segment at 44–79 is disordered; sequence RAGTKAQKTRREVSGGGAKPWRQKGTGRARAGSSRS.

The protein belongs to the universal ribosomal protein uL4 family. As to quaternary structure, part of the 50S ribosomal subunit.

Its function is as follows. One of the primary rRNA binding proteins, this protein initially binds near the 5'-end of the 23S rRNA. It is important during the early stages of 50S assembly. It makes multiple contacts with different domains of the 23S rRNA in the assembled 50S subunit and ribosome. Forms part of the polypeptide exit tunnel. This is Large ribosomal subunit protein uL4 from Coxiella burnetii (strain RSA 331 / Henzerling II).